Reading from the N-terminus, the 127-residue chain is UPF0325 protein VV1_1856 (127 aa).

Belongs to the UPF0325 family.

The polypeptide is UPF0325 protein VV1_1856 (Vibrio vulnificus (strain CMCP6)).